The primary structure comprises 501 residues: Sucrose-6-phosphate hydrolase (501 aa).

Substrate contacts are provided by residues 44–47 (LLND), glutamine 63, 106–107 (YT), 167–168 (RD), and glutamate 222. The active site involves aspartate 47.

The protein belongs to the glycosyl hydrolase 32 family.

The enzyme catalyses Hydrolysis of terminal non-reducing beta-D-fructofuranoside residues in beta-D-fructofuranosides.. It participates in glycan biosynthesis; sucrose metabolism. The chain is Sucrose-6-phosphate hydrolase (scrB) from Pediococcus pentosaceus.